The primary structure comprises 82 residues: RNA-binding protein Hfq (82 aa).

Positions aspartate 11–valine 71 constitute a Sm domain.

Belongs to the Hfq family. In terms of assembly, homohexamer.

Functionally, RNA chaperone that binds small regulatory RNA (sRNAs) and mRNAs to facilitate mRNA translational regulation in response to envelope stress, environmental stress and changes in metabolite concentrations. Also binds with high specificity to tRNAs. The chain is RNA-binding protein Hfq from Caulobacter vibrioides (strain ATCC 19089 / CIP 103742 / CB 15) (Caulobacter crescentus).